Consider the following 542-residue polypeptide: Phenylacetone monooxygenase (542 aa).

FAD contacts are provided by residues Ser27, Glu46, 54–57, Asp66, Tyr72, Val119, and Gln152; that span reads VWYW. 64-66 contacts NADP(+); it reads RCD. Residues 194-200, 217-218, and 336-337 contribute to the NADP(+) site; these read TGSSGIQ, RT, and KR. Met446 is an FAD binding site. Trp501 is a binding site for NADP(+).

The protein belongs to the FAD-binding monooxygenase family. Monomer. FAD is required as a cofactor.

The enzyme catalyses phenylacetone + NADPH + O2 + H(+) = benzyl acetate + NADP(+) + H2O. Catalyzes a Baeyer-Villiger oxidation reaction, i.e. the insertion of an oxygen atom into a carbon-carbon bond adjacent to a carbonyl, which converts ketones to esters. Is most efficient with phenylacetone as substrate, leading to the formation of benzyl acetate. Can also oxidize other aromatic ketones (benzylacetone, alpha-methylphenylacetone and 4-hydroxyacetophenone), some aliphatic ketones (dodecan-2-one and bicyclohept-2-en-6-one) and sulfides (e.g. methyl 4-tolylsulfide). The protein is Phenylacetone monooxygenase (pamO) of Thermobifida fusca (strain YX).